Reading from the N-terminus, the 482-residue chain is ATP synthase subunit beta, chloroplastic (482 aa).

168-175 contacts ATP; it reads GGAGVGKT.

The protein belongs to the ATPase alpha/beta chains family. As to quaternary structure, F-type ATPases have 2 components, CF(1) - the catalytic core - and CF(0) - the membrane proton channel. CF(1) has five subunits: alpha(3), beta(3), gamma(1), delta(1), epsilon(1). CF(0) has four main subunits: a(1), b(1), b'(1) and c(9-12).

The protein resides in the plastid. It localises to the chloroplast thylakoid membrane. It catalyses the reaction ATP + H2O + 4 H(+)(in) = ADP + phosphate + 5 H(+)(out). Its function is as follows. Produces ATP from ADP in the presence of a proton gradient across the membrane. The catalytic sites are hosted primarily by the beta subunits. This Gnetum parvifolium (Small-leaved jointfir) protein is ATP synthase subunit beta, chloroplastic.